Here is a 156-residue protein sequence, read N- to C-terminus: Peptide deformylase (156 aa).

Positions 90 and 132 each coordinate Fe cation. The active site involves glutamate 133. Histidine 136 lines the Fe cation pocket.

This sequence belongs to the polypeptide deformylase family. It depends on Fe(2+) as a cofactor.

It catalyses the reaction N-terminal N-formyl-L-methionyl-[peptide] + H2O = N-terminal L-methionyl-[peptide] + formate. Functionally, removes the formyl group from the N-terminal Met of newly synthesized proteins. Requires at least a dipeptide for an efficient rate of reaction. N-terminal L-methionine is a prerequisite for activity but the enzyme has broad specificity at other positions. This Natranaerobius thermophilus (strain ATCC BAA-1301 / DSM 18059 / JW/NM-WN-LF) protein is Peptide deformylase.